Reading from the N-terminus, the 78-residue chain is Large ribosomal subunit protein bL28 (78 aa).

This sequence belongs to the bacterial ribosomal protein bL28 family.

The sequence is that of Large ribosomal subunit protein bL28 from Methylococcus capsulatus (strain ATCC 33009 / NCIMB 11132 / Bath).